Here is a 162-residue protein sequence, read N- to C-terminus: Transcriptional regulator MraZ (162 aa).

2 SpoVT-AbrB domains span residues 11 to 62 (EHPS…GLSV) and 98 to 141 (AVEC…SRDT).

Belongs to the MraZ family. In terms of assembly, forms oligomers.

The protein localises to the cytoplasm. It is found in the nucleoid. This is Transcriptional regulator MraZ from Pelobacter propionicus (strain DSM 2379 / NBRC 103807 / OttBd1).